The primary structure comprises 156 residues: Small ribosomal subunit protein uS7 (156 aa).

It belongs to the universal ribosomal protein uS7 family. Part of the 30S ribosomal subunit. Contacts proteins S9 and S11.

In terms of biological role, one of the primary rRNA binding proteins, it binds directly to 16S rRNA where it nucleates assembly of the head domain of the 30S subunit. Is located at the subunit interface close to the decoding center, probably blocks exit of the E-site tRNA. The chain is Small ribosomal subunit protein uS7 from Nitrobacter winogradskyi (strain ATCC 25391 / DSM 10237 / CIP 104748 / NCIMB 11846 / Nb-255).